A 354-amino-acid polypeptide reads, in one-letter code: S-adenosylmethionine:tRNA ribosyltransferase-isomerase (354 aa).

Belongs to the QueA family. Monomer.

The protein resides in the cytoplasm. It catalyses the reaction 7-aminomethyl-7-carbaguanosine(34) in tRNA + S-adenosyl-L-methionine = epoxyqueuosine(34) in tRNA + adenine + L-methionine + 2 H(+). It participates in tRNA modification; tRNA-queuosine biosynthesis. Functionally, transfers and isomerizes the ribose moiety from AdoMet to the 7-aminomethyl group of 7-deazaguanine (preQ1-tRNA) to give epoxyqueuosine (oQ-tRNA). The polypeptide is S-adenosylmethionine:tRNA ribosyltransferase-isomerase (Pseudomonas fluorescens (strain ATCC BAA-477 / NRRL B-23932 / Pf-5)).